A 359-amino-acid polypeptide reads, in one-letter code: DNA replication and repair protein RecF (359 aa).

An ATP-binding site is contributed by 30–37 (GKNGIGKT).

It belongs to the RecF family.

Its subcellular location is the cytoplasm. Its function is as follows. The RecF protein is involved in DNA metabolism; it is required for DNA replication and normal SOS inducibility. RecF binds preferentially to single-stranded, linear DNA. It also seems to bind ATP. The protein is DNA replication and repair protein RecF of Flavobacterium johnsoniae (strain ATCC 17061 / DSM 2064 / JCM 8514 / BCRC 14874 / CCUG 350202 / NBRC 14942 / NCIMB 11054 / UW101) (Cytophaga johnsonae).